Consider the following 224-residue polypeptide: Large ribosomal subunit protein uL1 (224 aa).

Belongs to the universal ribosomal protein uL1 family. Part of the 50S ribosomal subunit.

Its function is as follows. Binds directly to 23S rRNA. The L1 stalk is quite mobile in the ribosome, and is involved in E site tRNA release. Functionally, protein L1 is also a translational repressor protein, it controls the translation of the L11 operon by binding to its mRNA. The chain is Large ribosomal subunit protein uL1 from Borrelia recurrentis (strain A1).